We begin with the raw amino-acid sequence, 321 residues long: Ribosomal RNA small subunit methyltransferase H (321 aa).

S-adenosyl-L-methionine contacts are provided by residues 40–42, D60, F84, D106, and Q113; that span reads GGH.

The protein belongs to the methyltransferase superfamily. RsmH family.

The protein resides in the cytoplasm. The enzyme catalyses cytidine(1402) in 16S rRNA + S-adenosyl-L-methionine = N(4)-methylcytidine(1402) in 16S rRNA + S-adenosyl-L-homocysteine + H(+). In terms of biological role, specifically methylates the N4 position of cytidine in position 1402 (C1402) of 16S rRNA. This is Ribosomal RNA small subunit methyltransferase H from Haemophilus influenzae (strain ATCC 51907 / DSM 11121 / KW20 / Rd).